We begin with the raw amino-acid sequence, 119 residues long: Protein SPIRAL1 (119 aa).

Over residues Met1 to Gln11 the composition is skewed to gly residues. Disordered stretches follow at residues Met1 to Thr47 and Glu85 to Pro105. Residues Ala24–Ala34 show a composition bias toward pro residues.

Belongs to the SPIRAL1 family. Ubiquitinated. Upon salt-stress induction, it is subject to proteasome-dependent degradation. In terms of tissue distribution, ubiquitous. High expression was associated with tissues undergoing rapid cell expansion, including the root elongation zone, hypocotyls of dark grown-seedlings, and cotyledons of light-grown seedlings.

It is found in the cytoplasm. It localises to the cytoskeleton. The protein resides in the phragmoplast. The protein localises to the spindle. In terms of biological role, required for directional control of cell elongation. Stabilizes growing ends of cortical microtubules and influences their dynamic properties. Acts redundantly with SP1Ls in maintaining the cortical microtubules organization essential for anisotropic cell growth. Plays a key role in salt stress-induced microtubules disassembly. The chain is Protein SPIRAL1 (SPR1) from Arabidopsis thaliana (Mouse-ear cress).